The sequence spans 70 residues: Peptide BmKn2 (70 aa).

The signal sequence occupies residues 1-23 (MKSQTFFLLFLVVLLLAISQSEA). At phenylalanine 36 the chain carries Phenylalanine amide. A propeptide spanning residues 40–70 (SMRDMDTMKYLYDPSLSAADLKTLQKLMENY) is cleaved from the precursor.

It belongs to the non-disulfide-bridged peptide (NDBP) superfamily. Short antimicrobial peptide (group 4) family. Expressed by the venom gland.

It is found in the secreted. Its subcellular location is the target cell membrane. Its function is as follows. Antimicrobial peptide with potent activity against bacteria. Has strong antibacterial activity against Gram-positive bacteria S.aureus, M.luteus, B.subtilis, and Gram-negative bacteria E.coli, P.aeruginosa and N.gonorrhoeae. Also shows low activity against HIV-1 PV. The polypeptide is Peptide BmKn2 (Olivierus martensii (Manchurian scorpion)).